The chain runs to 261 residues: NAD(P)H-quinone oxidoreductase subunit K, chloroplastic (261 aa).

[4Fe-4S] cluster is bound by residues Cys64, Cys65, Cys129, and Cys160.

This sequence belongs to the complex I 20 kDa subunit family. As to quaternary structure, NDH is composed of at least 16 different subunits, 5 of which are encoded in the nucleus. [4Fe-4S] cluster is required as a cofactor.

The protein resides in the plastid. It localises to the chloroplast thylakoid membrane. The catalysed reaction is a plastoquinone + NADH + (n+1) H(+)(in) = a plastoquinol + NAD(+) + n H(+)(out). It catalyses the reaction a plastoquinone + NADPH + (n+1) H(+)(in) = a plastoquinol + NADP(+) + n H(+)(out). NDH shuttles electrons from NAD(P)H:plastoquinone, via FMN and iron-sulfur (Fe-S) centers, to quinones in the photosynthetic chain and possibly in a chloroplast respiratory chain. The immediate electron acceptor for the enzyme in this species is believed to be plastoquinone. Couples the redox reaction to proton translocation, and thus conserves the redox energy in a proton gradient. The protein is NAD(P)H-quinone oxidoreductase subunit K, chloroplastic of Physcomitrium patens (Spreading-leaved earth moss).